Here is a 509-residue protein sequence, read N- to C-terminus: Ribonuclease Y (509 aa).

Residues 5–25 (IIILLSVFCGIFFICFIICSS) form a helical membrane-spanning segment. In terms of domain architecture, KH spans 199–259 (TTNIVKLPSD…IRREIATRTL (61 aa)). Positions 325–418 (VLAHSIEVAK…VAIADSISAS (94 aa)) constitute an HD domain.

It belongs to the RNase Y family.

It is found in the cell membrane. Endoribonuclease that initiates mRNA decay. In Mycoplasma mycoides subsp. mycoides SC (strain CCUG 32753 / NCTC 10114 / PG1), this protein is Ribonuclease Y.